The primary structure comprises 203 residues: Glycerol-3-phosphate acyltransferase (203 aa).

The next 5 membrane-spanning stretches (helical) occupy residues 5-25, 55-75, 84-104, 118-138, and 159-179; these read IYIA…GLIL, LAAA…IVAA, IAAN…LFPV, IGVL…MWLA, and IFLW…LTLL.

It belongs to the PlsY family. Probably interacts with PlsX.

The protein localises to the cell inner membrane. The enzyme catalyses an acyl phosphate + sn-glycerol 3-phosphate = a 1-acyl-sn-glycero-3-phosphate + phosphate. The protein operates within lipid metabolism; phospholipid metabolism. Functionally, catalyzes the transfer of an acyl group from acyl-phosphate (acyl-PO(4)) to glycerol-3-phosphate (G3P) to form lysophosphatidic acid (LPA). This enzyme utilizes acyl-phosphate as fatty acyl donor, but not acyl-CoA or acyl-ACP. In Rhodopseudomonas palustris (strain ATCC BAA-98 / CGA009), this protein is Glycerol-3-phosphate acyltransferase.